Consider the following 248-residue polypeptide: Protein GrpE (248 aa).

Positions 229 to 248 (AAPKEDTLPAQENQSSPADS) are disordered. Positions 238 to 248 (AQENQSSPADS) are enriched in polar residues.

It belongs to the GrpE family. Homodimer.

It localises to the cytoplasm. Its function is as follows. Participates actively in the response to hyperosmotic and heat shock by preventing the aggregation of stress-denatured proteins, in association with DnaK and GrpE. It is the nucleotide exchange factor for DnaK and may function as a thermosensor. Unfolded proteins bind initially to DnaJ; upon interaction with the DnaJ-bound protein, DnaK hydrolyzes its bound ATP, resulting in the formation of a stable complex. GrpE releases ADP from DnaK; ATP binding to DnaK triggers the release of the substrate protein, thus completing the reaction cycle. Several rounds of ATP-dependent interactions between DnaJ, DnaK and GrpE are required for fully efficient folding. The chain is Protein GrpE from Trichormus variabilis (strain ATCC 29413 / PCC 7937) (Anabaena variabilis).